We begin with the raw amino-acid sequence, 120 residues long: U13-lycotoxin-Ls1a (120 aa).

The signal sequence occupies residues 1–16; it reads MKILFVLISILHAVYC. A propeptide spanning residues 17 to 54 is cleaved from the precursor; sequence FSSEEDVDSAYLANELEPVEDINSEQYAALEPKEEHER. Disulfide bonds link C56–C70, C63–C76, C69–C87, and C78–C85. One can recognise an Agouti domain in the interval 56–95; it reads CADMGQDCKDDCDCCLNIATCNCWFGRYFCSCTFGDYQTC.

It belongs to the neurotoxin 05 (agouti) family. In terms of processing, contains 6 disulfide bonds. In terms of tissue distribution, expressed by the venom gland.

The protein resides in the secreted. In Lycosa singoriensis (Wolf spider), this protein is U13-lycotoxin-Ls1a.